Reading from the N-terminus, the 252-residue chain is Chitooligosaccharide deacetylase (252 aa).

The Mg(2+) site is built by H61 and H125.

Belongs to the YdjC deacetylase family. ChbG subfamily. Homodimer. Requires Mg(2+) as cofactor.

The protein resides in the cytoplasm. It carries out the reaction N,N'-diacetylchitobiose + H2O = N-acetyl-beta-D-glucosaminyl-(1-&gt;4)-D-glucosamine + acetate. The catalysed reaction is diacetylchitobiose-6'-phosphate + H2O = N'-monoacetylchitobiose-6'-phosphate + acetate. It functions in the pathway glycan degradation; chitin degradation. Functionally, involved in the degradation of chitin. ChbG is essential for growth on the acetylated chitooligosaccharides chitobiose and chitotriose but is dispensable for growth on cellobiose and chitosan dimer, the deacetylated form of chitobiose. Deacetylation of chitobiose-6-P and chitotriose-6-P is necessary for both the activation of the chb promoter by the regulatory protein ChbR and the hydrolysis of phosphorylated beta-glucosides by the phospho-beta-glucosidase ChbF. Catalyzes the removal of only one acetyl group from chitobiose-6-P to yield monoacetylchitobiose-6-P, the inducer of ChbR and the substrate of ChbF. The polypeptide is Chitooligosaccharide deacetylase (Escherichia coli O45:K1 (strain S88 / ExPEC)).